A 437-amino-acid polypeptide reads, in one-letter code: Nickel-cobalt-cadmium resistance protein NccC (437 aa).

Residues 1–48 (MGAVLKAEANIFRSHPFRPMNQATPKKLRSAPCIGVALLLMATGSIQA) form the signal peptide.

This sequence belongs to the outer membrane factor (OMF) (TC 1.B.17) family.

Its function is as follows. Component of the NCC cation-efflux system that confers resistance to nickel, cobalt and cadmium. This is Nickel-cobalt-cadmium resistance protein NccC (nccC) from Alcaligenes xylosoxydans xylosoxydans (Achromobacter xylosoxidans).